Reading from the N-terminus, the 229-residue chain is Germin-like protein 3-6 (229 aa).

The signal sequence occupies residues 1–31; sequence MEHSFKTIAAGVVIVVLLLQQAPVLIRATDA. A disulfide bridge connects residues Cys-38 and Cys-53. Residues 67 to 219 enclose the Cupin type-1 domain; that stretch reads SKIATGGDVN…ALRVDAGVVE (153 aa). Asn-80 and Asn-83 each carry an N-linked (GlcNAc...) asparagine glycan. Mn(2+)-binding residues include His-116, His-118, Glu-123, and His-165.

It belongs to the germin family. As to quaternary structure, oligomer (believed to be a pentamer but probably hexamer).

It localises to the secreted. The protein localises to the extracellular space. The protein resides in the apoplast. Functionally, may play a role in plant defense. Probably has no oxalate oxidase activity even if the active site is conserved. The chain is Germin-like protein 3-6 from Oryza sativa subsp. japonica (Rice).